Consider the following 400-residue polypeptide: NADPH dehydrogenase 3 (400 aa).

2 residues coordinate FMN: T38 and Q115. Substrate-binding residues include H192 and N195. The Proton donor role is filled by Y197. 2 residues coordinate FMN: R244 and R349. Y376 is a binding site for substrate.

In terms of assembly, homodimer or heterodimer with OYE2. It depends on FMN as a cofactor.

The catalysed reaction is A + NADPH + H(+) = AH2 + NADP(+). Flavin-dependent enoate reductase that catalyzes the chemo- and stereoslective hydrogenation of electron-poor alkenes. The enzyme is reduced by NADPH, and oxygen, quinones, and alpha,beta-unsaturated aldehydes and ketones can act as electron acceptors to complete catalytic turnover. The physiological oxidant remains elusive. Has a prooxidant activity, increasing reactive oxygen species (ROS) levels when overexpressed. Formation of OYE2-OYE3 heterodimers contribute to the induction of programmed cell death upon oxidative stress. This is NADPH dehydrogenase 3 from Saccharomyces cerevisiae (strain ATCC 204508 / S288c) (Baker's yeast).